Reading from the N-terminus, the 404-residue chain is 2,3-diketo-5-methylthiopentyl-1-phosphate enolase (404 aa).

Lysine 91 serves as the catalytic Proton acceptor. Substrate is bound by residues lysine 140, 166 to 169 (KDDE), histidine 257, glycine 329, and 351 to 352 (GG). The Mg(2+) site is built by lysine 166, aspartate 168, and glutamate 169. Lysine 166 carries the N6-carboxylysine modification.

It belongs to the RuBisCO large chain family. Type IV subfamily. Homodimer. Mg(2+) serves as cofactor.

It catalyses the reaction 5-methylsulfanyl-2,3-dioxopentyl phosphate = 2-hydroxy-5-methylsulfanyl-3-oxopent-1-enyl phosphate. It participates in amino-acid biosynthesis; L-methionine biosynthesis via salvage pathway; L-methionine from S-methyl-5-thio-alpha-D-ribose 1-phosphate: step 3/6. In terms of biological role, catalyzes the enolization of 2,3-diketo-5-methylthiopentyl-1-phosphate (DK-MTP-1-P) into 2-hydroxy-3-keto-5-methylthiopentenyl-1-phosphate (HK-MTPenyl-1-P). This chain is 2,3-diketo-5-methylthiopentyl-1-phosphate enolase, found in Bacillus velezensis (strain DSM 23117 / BGSC 10A6 / LMG 26770 / FZB42) (Bacillus amyloliquefaciens subsp. plantarum).